The following is a 398-amino-acid chain: uncharacterized protein (398 aa).

The CobW C-terminal domain maps to 235 to 351 (VAIVEFSARR…DIVNALNAAL (117 aa)).

This is an uncharacterized protein from Mycobacterium bovis (strain ATCC BAA-935 / AF2122/97).